Consider the following 571-residue polypeptide: Glycine--tRNA ligase (571 aa).

The substrate site is built by R99 and E165. Residues 197-199 (RNE), 207-212 (IRLREF), 324-325 (EC), and 443-446 (GIDR) each bind ATP. 212–216 (FTQAE) is a binding site for substrate. 439–443 (EPSFG) contributes to the substrate binding site.

Belongs to the class-II aminoacyl-tRNA synthetase family.

The protein resides in the cytoplasm. It carries out the reaction tRNA(Gly) + glycine + ATP = glycyl-tRNA(Gly) + AMP + diphosphate. Functionally, catalyzes the attachment of glycine to tRNA(Gly). This chain is Glycine--tRNA ligase, found in Pyrococcus abyssi (strain GE5 / Orsay).